The following is a 714-amino-acid chain: Stellatatriene synthase (714 aa).

Residues 1 to 325 (MEYKFSTVVD…RYNSSGSFSD (325 aa)) are stellata-2,6,19-trien synthase. 2 residues coordinate Mg(2+): Asp92 and Asp96. The DDXXD motif 1 motif lies at 92 to 96 (DDVTD). An NSE motif motif is present at residues 276-284 (YLKIVEEYK). The tract at residues 326 to 713 (HQLELMKNGV…LRLIMELLKT (388 aa)) is geranylgeranyl diphosphate synthase. Residues 332-356 (KNGVPKDPASGSTNGTSNGTSNGTS) are disordered. Low complexity predominate over residues 341-356 (SGSTNGTSNGTSNGTS). Isopentenyl diphosphate contacts are provided by Lys434, Arg437, and His466. Asp473 and Asp477 together coordinate Mg(2+). The DDXXD motif 2 motif lies at 473–477 (DDVED). Position 482 (Arg482) interacts with dimethylallyl diphosphate. Arg483 is an isopentenyl diphosphate binding site. The dimethylallyl diphosphate site is built by Lys560, Thr561, Gln596, Asn603, Lys613, and Lys623.

In the N-terminal section; belongs to the terpene synthase family. This sequence in the C-terminal section; belongs to the FPP/GGPP synthase family. As to quaternary structure, hexamer.

The catalysed reaction is 4 isopentenyl diphosphate + dimethylallyl diphosphate = (2E,6E,10E,14E)-geranylfarnesyl diphosphate + 4 diphosphate. It carries out the reaction (2E,6E,10E,14E)-geranylfarnesyl diphosphate = stellata-2,6,19-triene + diphosphate. It functions in the pathway secondary metabolite biosynthesis; terpenoid biosynthesis. Functionally, multifunctional diterpene synthase; part of the gene cluster that mediates the biosynthesis of the sesterterpene stellatic acid. The first step in the pathway is performed by the stellatatriene synthase that possesses both prenyl transferase and terpene cyclase activity, converting isopentenyl diphosphate and dimethylallyl diphosphate into geranylgeranyl diphosphate (GGDP) and then converting GGDP into stellata-2,6,19-triene. The cytochrome P450 monooxygenase Stl-P450 then catalyzes three successive oxidation reactions on the C-20 methyl group to generate the carboxylic acid of stellatic acid. The polypeptide is Stellatatriene synthase (Emericella variicolor (Aspergillus stellatus)).